A 393-amino-acid chain; its full sequence is Sedoheptulose-1,7-bisphosphatase, chloroplastic (393 aa).

A disulfide bond links C115 and C120. D126, E155, D176, L178, and D179 together coordinate Mg(2+). Residues 179-182 (DGSS), Y290, and K320 each bind substrate. E326 is a Mg(2+) binding site.

Belongs to the FBPase class 1 family. Homodimer. Mg(2+) is required as a cofactor.

Its subcellular location is the plastid. The protein localises to the chloroplast. It carries out the reaction D-sedoheptulose 1,7-bisphosphate + H2O = D-sedoheptulose 7-phosphate + phosphate. It participates in carbohydrate biosynthesis; Calvin cycle. This Triticum aestivum (Wheat) protein is Sedoheptulose-1,7-bisphosphatase, chloroplastic.